A 361-amino-acid polypeptide reads, in one-letter code: MGLTKKKVLVGMSGGVDSSVAAYLLKEQGYEVIGATMQIWQEDKEVEEREGGCCSLSAVEDARRVCDKLDIPFYVLNFRDSFKKKVIEPFIQEYIDGRTPNPCIECNKHLKFDELLRKAQGIGVDYIATGHYAKIDKKDDRYMLIRSDDDRKDQTYALYNFTQDQLAHTLMPCGEYTKDRIREIAKEIGLAVHNKKDSEEICFISDNDHGKYILNAKPGAVKSGNFVDKSGNILGKHKGIVYYTIGQRKGLGLSVGRPVFVTDINPKTNEVVIGAEEDIFKTELIAGDLNFITFDKLEKEIEVEAKIRYSARPGKATIVPLKDGRVKVVFNEKQRAITKGQSVVFYNGNIVIGGGVIEAII.

Residues 11-18 (GMSGGVDS) and M37 contribute to the ATP site. C106 functions as the Nucleophile in the catalytic mechanism. C106 and C202 are joined by a disulfide. G130 contributes to the ATP binding site. The interval 152-154 (KDQ) is interaction with tRNA. C202 (cysteine persulfide intermediate) is an active-site residue. Residues 308 to 309 (RY) form an interaction with tRNA region.

This sequence belongs to the MnmA/TRMU family.

It localises to the cytoplasm. The enzyme catalyses S-sulfanyl-L-cysteinyl-[protein] + uridine(34) in tRNA + AH2 + ATP = 2-thiouridine(34) in tRNA + L-cysteinyl-[protein] + A + AMP + diphosphate + H(+). Catalyzes the 2-thiolation of uridine at the wobble position (U34) of tRNA, leading to the formation of s(2)U34. This chain is tRNA-specific 2-thiouridylase MnmA, found in Clostridium botulinum (strain Eklund 17B / Type B).